We begin with the raw amino-acid sequence, 244 residues long: Myosin-7 (244 aa).

The rodlike tail (S2 and LMM domains) stretch occupies residues 1–244; sequence VEQTERSRKL…DIGTKGLNEE (244 aa). Residues 1 to 244 are a coiled coil; that stretch reads VEQTERSRKL…DIGTKGLNEE (244 aa). The tract at residues 216-244 is disordered; the sequence is EERADIAESQVNKLRAKSRDIGTKGLNEE. Positions 232 to 244 are enriched in basic and acidic residues; that stretch reads KSRDIGTKGLNEE.

In terms of assembly, muscle myosin is a hexameric protein that consists of 2 heavy chain subunits (MHC), 2 alkali light chain subunits (MLC) and 2 regulatory light chain subunits (MLC-2). Interacts with ECPAS. Interacts (via C-terminus) with LRRC39.

The protein resides in the cytoplasm. Its subcellular location is the myofibril. The protein localises to the sarcomere. Its function is as follows. Myosins are actin-based motor molecules with ATPase activity essential for muscle contraction. Forms regular bipolar thick filaments that, together with actin thin filaments, constitute the fundamental contractile unit of skeletal and cardiac muscle. In Papio hamadryas (Hamadryas baboon), this protein is Myosin-7 (MYH7).